The following is a 137-amino-acid chain: MIKKYEVMYILDQDVKDTKELVSKLDAILAENGKILESNDLGLLDFTYEINHKKKGFYHVVIVEATTQAIKEFERIAKIDKNVVRTLVLNTENIQNYEQSVVLSKTDMTKYEEEQREKKNFRKPFIKREEAAVKESK.

Belongs to the bacterial ribosomal protein bS6 family.

Its function is as follows. Binds together with bS18 to 16S ribosomal RNA. This Mycoplasma mycoides subsp. mycoides SC (strain CCUG 32753 / NCTC 10114 / PG1) protein is Small ribosomal subunit protein bS6.